The primary structure comprises 310 residues: Glutaminase 1 (310 aa).

Residues Ser-66, Asn-117, Glu-161, Asn-168, Tyr-192, Tyr-244, and Val-262 each contribute to the substrate site. The residue at position 294 (Lys-294) is an N6-acetyllysine.

The protein belongs to the glutaminase family. Homotetramer.

It carries out the reaction L-glutamine + H2O = L-glutamate + NH4(+). This is Glutaminase 1 from Escherichia coli O6:H1 (strain CFT073 / ATCC 700928 / UPEC).